Reading from the N-terminus, the 237-residue chain is Uridylate kinase (237 aa).

10–13 is an ATP binding site; that stretch reads KLSG. Residue G51 participates in UMP binding. G52 and R56 together coordinate ATP. UMP is bound by residues D71 and 133 to 140; that span reads TGNPCFTT. Residues T160, Y166, and D169 each contribute to the ATP site.

It belongs to the UMP kinase family. In terms of assembly, homohexamer.

The protein localises to the cytoplasm. It catalyses the reaction UMP + ATP = UDP + ADP. It participates in pyrimidine metabolism; CTP biosynthesis via de novo pathway; UDP from UMP (UMPK route): step 1/1. Its activity is regulated as follows. Inhibited by UTP. In terms of biological role, catalyzes the reversible phosphorylation of UMP to UDP. This chain is Uridylate kinase, found in Vesicomyosocius okutanii subsp. Calyptogena okutanii (strain HA).